The primary structure comprises 328 residues: MPLHNLTRFPRLEFIGAPTPLEYLPRFSDYLGREIFIKRDDVTPMAMGGNKLRKLEFLAADALREGADTLITAGAIQSNHVRQTAAVAAKLGLHCVALLENPIGTTAENYLTNGNRLLLDLFNTQIEMCDALTDPNAQLEELATRVEAQGFRPYVIPVGGSNALGALGYVESALEIAQQCEGAVNISSVVVASGSAGTHAGLAVGLEHLLPESELIGVTVSRSVADQLPKVVNLQQAIAKELELTASAEILLWDDYFAPGYGVPNDEGMEAVKLLARFEGILLDPVYTGKAMAGLIDGISQKRFKDEGPILFIHTGGAPALFAYHPHV.

Lysine 51 is subject to N6-(pyridoxal phosphate)lysine.

This sequence belongs to the ACC deaminase/D-cysteine desulfhydrase family. In terms of assembly, homodimer. Pyridoxal 5'-phosphate serves as cofactor.

The catalysed reaction is D-cysteine + H2O = hydrogen sulfide + pyruvate + NH4(+) + H(+). Functionally, catalyzes the alpha,beta-elimination reaction of D-cysteine and of several D-cysteine derivatives. It could be a defense mechanism against D-cysteine. This is D-cysteine desulfhydrase from Escherichia coli O9:H4 (strain HS).